A 236-amino-acid chain; its full sequence is Phosphoribosylaminoimidazole-succinocarboxamide synthase (236 aa).

Belongs to the SAICAR synthetase family.

It catalyses the reaction 5-amino-1-(5-phospho-D-ribosyl)imidazole-4-carboxylate + L-aspartate + ATP = (2S)-2-[5-amino-1-(5-phospho-beta-D-ribosyl)imidazole-4-carboxamido]succinate + ADP + phosphate + 2 H(+). Its pathway is purine metabolism; IMP biosynthesis via de novo pathway; 5-amino-1-(5-phospho-D-ribosyl)imidazole-4-carboxamide from 5-amino-1-(5-phospho-D-ribosyl)imidazole-4-carboxylate: step 1/2. This chain is Phosphoribosylaminoimidazole-succinocarboxamide synthase, found in Rickettsia canadensis (strain McKiel).